Reading from the N-terminus, the 255-residue chain is Geranylgeranylglyceryl phosphate synthase (255 aa).

Mg(2+) contacts are provided by aspartate 34 and threonine 64. Sn-glycerol 1-phosphate contacts are provided by residues 182-188 (YLEAGSG), 213-214 (GG), and 235-236 (GN).

The protein belongs to the GGGP/HepGP synthase family. Group II subfamily. The cofactor is Mg(2+).

The protein localises to the cytoplasm. It carries out the reaction sn-glycerol 1-phosphate + (2E,6E,10E)-geranylgeranyl diphosphate = sn-3-O-(geranylgeranyl)glycerol 1-phosphate + diphosphate. The protein operates within membrane lipid metabolism; glycerophospholipid metabolism. Its function is as follows. Prenyltransferase that catalyzes the transfer of the geranylgeranyl moiety of geranylgeranyl diphosphate (GGPP) to the C3 hydroxyl of sn-glycerol-1-phosphate (G1P). This reaction is the first ether-bond-formation step in the biosynthesis of archaeal membrane lipids. The polypeptide is Geranylgeranylglyceryl phosphate synthase (Saccharolobus islandicus (strain M.14.25 / Kamchatka #1) (Sulfolobus islandicus)).